A 142-amino-acid chain; its full sequence is Putative FK506-binding protein 9-like protein (142 aa).

In terms of domain architecture, PPIase FKBP-type spans 1-49 (MDMGLREMCVGEKRTVIIPPHLGYGEAGVDGEVPGSAVLVFDIELLELV). EF-hand domains are found at residues 60 to 95 (WNGE…QVAS) and 105 to 140 (DAEL…AKQD). The Ca(2+) site is built by Asp118, Asn120, Asp122, Lys124, and Glu129.

In Homo sapiens (Human), this protein is Putative FK506-binding protein 9-like protein (FKBP9P1).